The following is a 211-amino-acid chain: Small ribosomal subunit protein uS3 (211 aa).

The KH type-2 domain occupies 38–106 (LRKFIKKAFY…NIELNIIEVK (69 aa)).

The protein belongs to the universal ribosomal protein uS3 family. Part of the 30S ribosomal subunit. Forms a tight complex with proteins S10 and S14.

In terms of biological role, binds the lower part of the 30S subunit head. Binds mRNA in the 70S ribosome, positioning it for translation. This is Small ribosomal subunit protein uS3 from Ehrlichia ruminantium (strain Welgevonden).